The chain runs to 323 residues: uncharacterized protein (323 aa).

This is an uncharacterized protein from Treponema pallidum (strain Nichols).